A 454-amino-acid polypeptide reads, in one-letter code: Argininosuccinate lyase (454 aa).

This sequence belongs to the lyase 1 family. Argininosuccinate lyase subfamily.

It is found in the cytoplasm. The catalysed reaction is 2-(N(omega)-L-arginino)succinate = fumarate + L-arginine. It participates in amino-acid biosynthesis; L-arginine biosynthesis; L-arginine from L-ornithine and carbamoyl phosphate: step 3/3. In Herpetosiphon aurantiacus (strain ATCC 23779 / DSM 785 / 114-95), this protein is Argininosuccinate lyase.